The sequence spans 437 residues: Histidine--tRNA ligase (437 aa).

It belongs to the class-II aminoacyl-tRNA synthetase family. In terms of assembly, homodimer.

It localises to the cytoplasm. The enzyme catalyses tRNA(His) + L-histidine + ATP = L-histidyl-tRNA(His) + AMP + diphosphate + H(+). In Leptospira biflexa serovar Patoc (strain Patoc 1 / Ames), this protein is Histidine--tRNA ligase.